The sequence spans 507 residues: Histidine ammonia-lyase (507 aa).

A cross-link (5-imidazolinone (Ala-Gly)) is located at residues 141–143; the sequence is ASG. Position 142 is a 2,3-didehydroalanine (Ser) (Ser142).

Belongs to the PAL/histidase family. In terms of processing, contains an active site 4-methylidene-imidazol-5-one (MIO), which is formed autocatalytically by cyclization and dehydration of residues Ala-Ser-Gly.

The protein localises to the cytoplasm. It carries out the reaction L-histidine = trans-urocanate + NH4(+). Its pathway is amino-acid degradation; L-histidine degradation into L-glutamate; N-formimidoyl-L-glutamate from L-histidine: step 1/3. This chain is Histidine ammonia-lyase, found in Burkholderia pseudomallei (strain 1106a).